Here is a 105-residue protein sequence, read N- to C-terminus: Integration host factor (105 aa).

The short motif at 64-71 (LPKVGKVK) is the H2TH motif, binds DNA element. The segment at 82 to 94 (APTRRLRGLGDRQ) is lid, binds DNA.

It belongs to the actinobacterial IHF (aIHF) family. In terms of assembly, binds DNA as a monomer. (Microbial infection) Forms a complex with L5 Int and attP DNA. The complex binds attB to form products.

The protein resides in the cytoplasm. It localises to the nucleoid. Its function is as follows. A nucleoid-associated protein (NAP) that binds DNA without any sequence specificity. Compacts DNA. Binds along the whole chromosome in a dynamic manner, has equal affinity for the oriC site, attB and a randon 62% GC-rich sequence. Plays a role in transcription regulation. Functionally, (Microbial infection) Stimulates temperate Mycobacterium phage L5 Int-mediated recombination in vitro using supercoiled attP (phage attachment site) DNA, linear attB DNA (bacterial attachment site) and L5 integrase (L5 Int or Int-L5, AC P22884). mIHF acts on L5 Int to stimulate formation of a specific intasome complex. mIHF probably stabilizes a sharp bend in the DNA during phage integration. This is Integration host factor from Mycolicibacterium smegmatis (strain ATCC 700084 / mc(2)155) (Mycobacterium smegmatis).